Consider the following 273-residue polypeptide: Small ribosomal subunit protein uS3 (273 aa).

The region spanning 40-110 is the KH type-2 domain; the sequence is IRNLFFVNYR…NLDLTINEIG (71 aa). The segment covering 244–265 has biased composition (polar residues); that stretch reads QVLSANKLTGSDVETSSIQALT. The interval 244–273 is disordered; that stretch reads QVLSANKLTGSDVETSSIQALTKPNKEDKQ.

This sequence belongs to the universal ribosomal protein uS3 family. In terms of assembly, part of the 30S ribosomal subunit. Forms a tight complex with proteins S10 and S14.

Its function is as follows. Binds the lower part of the 30S subunit head. Binds mRNA in the 70S ribosome, positioning it for translation. This Mycoplasma pneumoniae (strain ATCC 29342 / M129 / Subtype 1) (Mycoplasmoides pneumoniae) protein is Small ribosomal subunit protein uS3.